The primary structure comprises 244 residues: uncharacterized protein (244 aa).

Positions 1–19 are cleaved as a signal peptide; it reads MRGIFFLILILNFIGLIFS. Residues Asn45 and Asn77 are each glycosylated (N-linked (GlcNAc...) asparagine). ShKT domains are found at residues 67-105 and 113-149; these read CNNP…CGKC and CSDK…CNRC. 3 cysteine pairs are disulfide-bonded: Cys113–Cys149, Cys122–Cys142, and Cys129–Cys146. Asn152 and Asn158 each carry an N-linked (GlcNAc...) asparagine glycan. ShKT domains lie at 171–205 and 208–243; these read CTDL…CNAC and CEDA…CNIC. Disulfide bonds link Cys171/Cys205, Cys178/Cys198, Cys185/Cys202, Cys208/Cys243, Cys215/Cys236, and Cys224/Cys240.

This is an uncharacterized protein from Caenorhabditis elegans.